Here is a 553-residue protein sequence, read N- to C-terminus: Meiotic expression up-regulated protein 18 (553 aa).

The segment at 267–305 (SNETLCSNDSKHRIARLKNEDNTQKPISKKRKSKKASHK) is disordered. The span at 275–289 (DSKHRIARLKNEDNT) shows a compositional bias: basic and acidic residues. Basic residues predominate over residues 293–304 (ISKKRKSKKASH).

The sequence is that of Meiotic expression up-regulated protein 18 (meu18) from Schizosaccharomyces pombe (strain 972 / ATCC 24843) (Fission yeast).